The chain runs to 270 residues: Pyrroline-5-carboxylate reductase (270 aa).

This sequence belongs to the pyrroline-5-carboxylate reductase family.

It is found in the cytoplasm. The catalysed reaction is L-proline + NADP(+) = (S)-1-pyrroline-5-carboxylate + NADPH + 2 H(+). It catalyses the reaction L-proline + NAD(+) = (S)-1-pyrroline-5-carboxylate + NADH + 2 H(+). Its pathway is amino-acid biosynthesis; L-proline biosynthesis; L-proline from L-glutamate 5-semialdehyde: step 1/1. Functionally, catalyzes the reduction of 1-pyrroline-5-carboxylate (PCA) to L-proline. This Corynebacterium melassecola protein is Pyrroline-5-carboxylate reductase.